The chain runs to 371 residues: DNA replication and repair protein RecF (371 aa).

ATP is bound at residue 30–37 (GENAQGKT).

The protein belongs to the RecF family.

It localises to the cytoplasm. Functionally, the RecF protein is involved in DNA metabolism; it is required for DNA replication and normal SOS inducibility. RecF binds preferentially to single-stranded, linear DNA. It also seems to bind ATP. The sequence is that of DNA replication and repair protein RecF from Staphylococcus haemolyticus (strain JCSC1435).